The sequence spans 265 residues: Cell division protein DivIB (265 aa).

Topologically, residues 1-33 (MRMELKMMGNVNKSNKTNEYILRRHKKKRKKKL) are cytoplasmic. Residues 34 to 54 (IIFSILLISILVTLCFKHPFF) form a helical membrane-spanning segment. The POTRA domain occupies 54 to 122 (FNVKIVEVKD…NKIVIHIKER (69 aa)). The Extracellular portion of the chain corresponds to 55–265 (NVKIVEVKDN…FKGNPVVFIK (211 aa)).

This sequence belongs to the FtsQ/DivIB family. DivIB subfamily.

It localises to the cell membrane. Cell division protein that may be involved in stabilizing or promoting the assembly of the division complex. The chain is Cell division protein DivIB from Clostridium tetani (strain Massachusetts / E88).